The primary structure comprises 354 residues: Transcription termination factor 3, mitochondrial (354 aa).

Residues 1-89 (MFCSALRNIL…SFNLAAYVNN (89 aa)) constitute a mitochondrion transit peptide.

It belongs to the mTERF family.

The protein localises to the mitochondrion. Its function is as follows. Binds promoter DNA and regulates initiation of transcription. Regulator of mitochondrial ribosome biogenesis and translation that is essential for development. Required for normal mitochondrial transcription and translation. Required for assembly of mitochondrial respiratory complexes and normal mitochondrial function. Maintains 16S rRNA levels and functions in mitochondrial ribosome assembly by regulating the biogenesis of the 39S ribosomal subunit. In Drosophila melanogaster (Fruit fly), this protein is Transcription termination factor 3, mitochondrial.